The primary structure comprises 60 residues: Large ribosomal subunit protein bL33 (60 aa).

It belongs to the bacterial ribosomal protein bL33 family.

The chain is Large ribosomal subunit protein bL33 from Flavobacterium psychrophilum (strain ATCC 49511 / DSM 21280 / CIP 103535 / JIP02/86).